The primary structure comprises 115 residues: U3-lycotoxin-Ls1q (115 aa).

The first 20 residues, 1–20 (MKFVLLFGVLLVTLFSYSSA), serve as a signal peptide directing secretion. Residues 21–44 (EMFDDFDQADEDELLSLIEKEEAR) constitute a propeptide that is removed on maturation. Cystine bridges form between cysteine 48/cysteine 63, cysteine 55/cysteine 72, cysteine 62/cysteine 87, and cysteine 74/cysteine 85.

The protein belongs to the neurotoxin 19 (CSTX) family. 01 subfamily. Expressed by the venom gland.

It is found in the secreted. The polypeptide is U3-lycotoxin-Ls1q (Lycosa singoriensis (Wolf spider)).